Reading from the N-terminus, the 790-residue chain is Cadherin-6 (790 aa).

A signal peptide spans 1 to 18; that stretch reads MRTYRYFLLLFWVGQPYP. The propeptide occupies 19–53; sequence TLSTPLSKRTSGFPAKKRALELSGNSKNELNRSKR. Asparagine 49 carries an N-linked (GlcNAc...) asparagine glycan. Cadherin domains lie at 54 to 159, 160 to 268, 269 to 383, 384 to 486, and 487 to 608; these read SWMW…EPIF, TKEV…PPRF, PQST…PPVF, SKLA…DNAP, and EFAE…LIHP. Topologically, residues 54 to 615 are extracellular; the sequence is SWMWNQFFLL…IHPTGLSTGA (562 aa). Asparagine 255 carries N-linked (GlcNAc...) asparagine glycosylation. The tract at residues 259-288 is disordered; sequence TDVNDNPPRFPQSTYQFKTPESSPPGTPIG. Positions 269 to 279 are enriched in polar residues; the sequence is PQSTYQFKTPE. 4 N-linked (GlcNAc...) asparagine glycosylation sites follow: asparagine 399, asparagine 437, asparagine 455, and asparagine 536. Residues 616–636 form a helical membrane-spanning segment; that stretch reads LVAILLCIVILLVTVVLFAAL. Topologically, residues 637–790 are cytoplasmic; sequence RRQRKKEPLI…YGGVDSDKDS (154 aa). A phosphoserine mark is found at serine 786 and serine 790.

In terms of tissue distribution, highly expressed in brain, cerebellum, and kidney. Lung, pancreas, and gastric mucosa show a weak expression. Also expressed in certain liver and kidney carcinomas.

Its subcellular location is the cell membrane. Its function is as follows. Cadherins are calcium-dependent cell adhesion proteins. They preferentially interact with themselves in a homophilic manner in connecting cells; cadherins may thus contribute to the sorting of heterogeneous cell types. This Homo sapiens (Human) protein is Cadherin-6 (CDH6).